Consider the following 227-residue polypeptide: MPEINTDHLDKQQVQLLAEMCILIDENDNKIGAETKKNCHLNENIEKGLLHRAFSVFLFNTENKLLLQQRSDAKITFPGCFTNTCCSHPLSNPGELEENDALGVRRAAQRRLKAELGIPLEEVPPEEINYLTRIHYKAQSDGIWGEHEIDYILFVRKNVTLNPDPNEIKSFCYVSKEELKELLKKAANGEIKITPWFQIIAETFLFKWWDNLNHLNQFVDHEKIHRM.

A substrate-binding site is contributed by K36. 2 residues coordinate Mg(2+): H40 and H51. The Nudix hydrolase domain maps to 49-199 (LLHRAFSVFL…EIKITPWFQI (151 aa)). R70 and K74 together coordinate substrate. C86 is a catalytic residue. S87 provides a ligand contact to substrate. E146 and E148 together coordinate Mg(2+). E148 is a catalytic residue. K176 carries the post-translational modification N6-acetyllysine. Positions 225 to 227 (HRM) match the Microbody targeting signal motif.

It belongs to the IPP isomerase type 1 family. In terms of assembly, monomer. Mg(2+) is required as a cofactor.

It localises to the peroxisome. It carries out the reaction isopentenyl diphosphate = dimethylallyl diphosphate. The protein operates within isoprenoid biosynthesis; dimethylallyl diphosphate biosynthesis; dimethylallyl diphosphate from isopentenyl diphosphate: step 1/1. In terms of biological role, catalyzes the 1,3-allylic rearrangement of the homoallylic substrate isopentenyl (IPP) to its highly electrophilic allylic isomer, dimethylallyl diphosphate (DMAPP). The protein is Isopentenyl-diphosphate Delta-isomerase 1 (IDI1) of Macaca fascicularis (Crab-eating macaque).